Consider the following 209-residue polypeptide: uncharacterized protein (209 aa).

This is an uncharacterized protein from Acanthamoeba polyphaga mimivirus (APMV).